A 295-amino-acid chain; its full sequence is MSNSQSKKIFGLIGKHVDYSWSPLIHNTGFEALGLPCVYTIFNIPSPEMIGDALKGSRALGIAGFSVTIPYKKTVVPFLDELSPEALSIGAVNTIVNDNGRLLGYNTDIDGFAAPLLPMAESIRNRPVCIFGNGGAALAAVEAFRLRFNPSSVLLVVRDTQKAEDMLEEYAYRDLVTIHAGREIDQPACSKLIRDCRVLVNATPVGTAGRNDHIHSILPTGHGLLHDGQIVYDMVYNPPETPLLAEARAAGATVIAGIEMLIAQAARAFSIWTGQELPVDLVRKTVLAAIEKSEG.

Residues 20–22 and Thr-68 contribute to the shikimate site; that span reads SWS. The active-site Proton acceptor is the Lys-72. Shikimate-binding residues include Asn-93 and Asp-108. NADP(+) is bound by residues 132-136 and Met-234; that span reads GNGGA. Tyr-236 contacts shikimate. An NADP(+)-binding site is contributed by Gly-257.

This sequence belongs to the shikimate dehydrogenase family. As to quaternary structure, homodimer.

It carries out the reaction shikimate + NADP(+) = 3-dehydroshikimate + NADPH + H(+). Its pathway is metabolic intermediate biosynthesis; chorismate biosynthesis; chorismate from D-erythrose 4-phosphate and phosphoenolpyruvate: step 4/7. Functionally, involved in the biosynthesis of the chorismate, which leads to the biosynthesis of aromatic amino acids. Catalyzes the reversible NADPH linked reduction of 3-dehydroshikimate (DHSA) to yield shikimate (SA). In Chlorobaculum tepidum (strain ATCC 49652 / DSM 12025 / NBRC 103806 / TLS) (Chlorobium tepidum), this protein is Shikimate dehydrogenase (NADP(+)).